A 315-amino-acid chain; its full sequence is Methionyl-tRNA formyltransferase (315 aa).

Position 113–116 (113–116) interacts with (6S)-5,6,7,8-tetrahydrofolate; sequence SILP.

It belongs to the Fmt family.

It catalyses the reaction L-methionyl-tRNA(fMet) + (6R)-10-formyltetrahydrofolate = N-formyl-L-methionyl-tRNA(fMet) + (6S)-5,6,7,8-tetrahydrofolate + H(+). Attaches a formyl group to the free amino group of methionyl-tRNA(fMet). The formyl group appears to play a dual role in the initiator identity of N-formylmethionyl-tRNA by promoting its recognition by IF2 and preventing the misappropriation of this tRNA by the elongation apparatus. The polypeptide is Methionyl-tRNA formyltransferase (Vibrio cholerae serotype O1 (strain ATCC 39541 / Classical Ogawa 395 / O395)).